We begin with the raw amino-acid sequence, 137 residues long: Acidic phospholipase A2 beta-bungarotoxin A chain (137 aa).

A signal peptide spans 1–9; sequence AVCVSLLGA. Positions 10 to 17 are excised as a propeptide; it reads ANIPPHPL. Cystine bridges form between C44–C136, C46–C62, C61–C117, C68–C110, C78–C103, and C96–C108. Ca(2+) contacts are provided by Y45, G47, and G49. H65 is an active-site residue. Ca(2+) is bound at residue D66. Residue D111 is part of the active site.

Belongs to the phospholipase A2 family. Group I subfamily. D49 sub-subfamily. Heterodimer; disulfide-linked. The A chain has phospholipase A2 activity and the B chain shows homology with the basic protease inhibitors. The cofactor is Ca(2+). In terms of tissue distribution, expressed by the venom gland.

It is found in the secreted. It catalyses the reaction a 1,2-diacyl-sn-glycero-3-phosphocholine + H2O = a 1-acyl-sn-glycero-3-phosphocholine + a fatty acid + H(+). Functionally, beta bungarotoxin is a presynaptic neurotoxin. The A chain has phospholipase activity. PLA2 catalyzes the calcium-dependent hydrolysis of the 2-acyl groups in 3-sn-phosphoglycerides. The chain is Acidic phospholipase A2 beta-bungarotoxin A chain from Bungarus candidus (Malayan krait).